The chain runs to 749 residues: Cytosolic phospholipase A2 (749 aa).

Positions 1-178 (MSFIDPYQHI…MKKLLGPKNS (178 aa)) are phospholipid binding. Serine 2 carries the post-translational modification Phosphoserine. Residues 6–122 (PYQHIIVEHH…KVGEKKQVPF (117 aa)) enclose the C2 domain. Aspartate 40, threonine 41, aspartate 43, asparagine 65, aspartate 93, alanine 94, and asparagine 95 together coordinate Ca(2+). Residues 140–740 (SSPDLRFSMA…SSVEARRFFN (601 aa)) enclose the PLA2c domain. Serine 228 (nucleophile) is an active-site residue. Threonine 268 bears the Phosphothreonine mark. Residues 426–458 (AKHIVSNDSSDSDDESQGPKGTEHEEAEREYQN) form a disordered region. Phosphoserine is present on residues serine 434, serine 435, and serine 437. Over residues 446 to 457 (GTEHEEAEREYQ) the composition is skewed to basic and acidic residues. Serine 505 is subject to Phosphoserine; by MAPK. The residue at position 515 (serine 515) is a Phosphoserine. Lysine 541 participates in a covalent cross-link: Glycyl lysine isopeptide (Lys-Gly) (interchain with G-Cter in SUMO2). Aspartate 549 (proton acceptor) is an active-site residue. Residue lysine 606 forms a Glycyl lysine isopeptide (Lys-Gly) (interchain with G-Cter in SUMO2) linkage. Residues serine 727 and serine 729 each carry the phosphoserine modification.

As to quaternary structure, interacts with KAT5. In terms of processing, phosphorylated at both Ser-505 and Ser-727 in response to mitogenic stimuli. As to expression, detected in granulosa cells after stimulation with chorionic gonadotropin (at protein level).

It is found in the cytoplasm. The protein localises to the golgi apparatus membrane. The protein resides in the nucleus envelope. The enzyme catalyses a 1,2-diacyl-sn-glycero-3-phosphocholine + H2O = a 1-acyl-sn-glycero-3-phosphocholine + a fatty acid + H(+). The catalysed reaction is a 1-O-alkyl-2-acyl-sn-glycero-3-phosphocholine + H2O = a 1-O-alkyl-sn-glycero-3-phosphocholine + a fatty acid + H(+). It catalyses the reaction a 1-acyl-sn-glycero-3-phosphocholine + H2O = sn-glycerol 3-phosphocholine + a fatty acid + H(+). It carries out the reaction 1-hexadecanoyl-2-(5Z,8Z,11Z,14Z-eicosatetraenoyl)-sn-glycero-3-phosphocholine + H2O = 1-hexadecanoyl-sn-glycero-3-phosphocholine + (5Z,8Z,11Z,14Z)-eicosatetraenoate + H(+). The enzyme catalyses 1,2-di-(5Z,8Z,11Z,14Z-eicosatetraenoyl)-sn-glycero-3-phosphocholine + H2O = 1-(5Z,8Z,11Z,14Z-eicosatetraenoyl)-sn-glycero-3-phosphocholine + (5Z,8Z,11Z,14Z)-eicosatetraenoate + H(+). The catalysed reaction is 1-octadecanoyl-2-(5Z,8Z,11Z,14Z-eicosatetraenoyl)-sn-glycero-3-phosphocholine + H2O = 1-octadecanoyl-sn-glycero-3-phosphocholine + (5Z,8Z,11Z,14Z)-eicosatetraenoate + H(+). It catalyses the reaction 1-hexadecanoyl-2-(9Z,12Z-octadecadienoyl)-sn-glycero-3-phosphocholine + H2O = (9Z,12Z)-octadecadienoate + 1-hexadecanoyl-sn-glycero-3-phosphocholine + H(+). It carries out the reaction 1-octadecanoyl-2-(9Z,12Z,15Z-octadecatrienoyl)-sn-glycero-3-phosphocholine + H2O = (9Z,12Z,15Z)-octadecatrienoate + 1-octadecanoyl-sn-glycero-3-phosphocholine + H(+). The enzyme catalyses 1-(5Z,8Z,11Z,14Z-eicosatetraenoyl)-2-hexadecanoyl-sn-glycero-3-phosphocholine + H2O = 1-(5Z,8Z,11Z,14Z-eicosatetraenoyl)-sn-glycero-3-phosphocholine + hexadecanoate + H(+). The catalysed reaction is 1-O-hexadecyl-2-(5Z,8Z,11Z,14Z)-eicosatetraenoyl-sn-glycero-3-phosphocholine + H2O = 1-O-hexadecyl-sn-glycero-3-phosphocholine + (5Z,8Z,11Z,14Z)-eicosatetraenoate + H(+). It catalyses the reaction 1,2-di-(9Z-octadecenoyl)-sn-glycero-3-phospho-(1'-sn-glycerol) + H2O = 1-(9Z-octadecenoyl)-sn-glycero-3-phospho-(1'-sn-glycerol) + (9Z)-octadecenoate + H(+). It carries out the reaction 1-octadecanoyl-2-(5Z,8Z,11Z,14Z-eicosatetraenoyl)-sn-glycero-3-phosphate + H2O = 1-octadecanoyl-sn-glycero-3-phosphate + (5Z,8Z,11Z,14Z)-eicosatetraenoate + H(+). The enzyme catalyses 1-hexadecanoyl-sn-glycero-3-phosphocholine + H2O = sn-glycerol 3-phosphocholine + hexadecanoate + H(+). The catalysed reaction is 2-(prostaglandin E2)-sn-glycero-3-phosphoethanolamine + H2O = sn-glycero-3-phosphoethanolamine + prostaglandin E2 + H(+). It catalyses the reaction 2-[(15S)-hydroxy-(5Z,8Z,11Z,13E)-eicosatetraenoyl]-sn-glycero-3-phosphocholine + H2O = (15S)-hydroxy-(5Z,8Z,11Z,13E)-eicosatetraenoate + sn-glycerol 3-phosphocholine + H(+). It carries out the reaction 2-[(15R)-hydroxy-(5Z,8Z,11Z,13E)-eicosatetraenoyl]-sn-glycero-3-phosphocholine + H2O = (15R)-hydroxy-(5Z,8Z,11Z,13E)-eicosatetraenoate + sn-glycerol 3-phosphocholine + H(+). The enzyme catalyses 2-(prostaglandin E2)-sn-glycero-3-phosphocholine + H2O = prostaglandin E2 + sn-glycerol 3-phosphocholine + H(+). The catalysed reaction is 2-[(11R)-hydroxy-(5Z,8Z,12E,14Z)-eicosatetraenoyl]-sn-glycero-3-phosphocholine + H2O = (11R)-hydroxy-(5Z,8Z,12E,14Z)-eicosatetraenoate + sn-glycerol 3-phosphocholine + H(+). It catalyses the reaction 1-(5Z,8Z,11Z,14Z-eicosatetraenoyl)-2-O-hexadecyl-sn-glycero-3-phosphocholine + H2O = 2-O-hexadecyl-sn-glycero-3-phosphocholine + (5Z,8Z,11Z,14Z)-eicosatetraenoate + H(+). It carries out the reaction 1-octadecanoyl-2-(5Z,8Z,11Z,14Z-eicosatetraenoyl)-sn-glycero-3-phosphocholine + glycerol = 1-(5Z,8Z,11Z,14Z-eicosatetraenoyl)-glycerol + 1-octadecanoyl-sn-glycero-3-phosphocholine. The enzyme catalyses 1-octadecanoyl-2-(9Z,12Z,15Z-octadecatrienoyl)-sn-glycero-3-phosphocholine + glycerol = 1-(9Z,12Z,15Z-octadecatrienoyl)-glycerol + 1-octadecanoyl-sn-glycero-3-phosphocholine. The protein operates within membrane lipid metabolism; glycerophospholipid metabolism. It participates in lipid metabolism; arachidonate metabolism. Its pathway is lipid metabolism; prostaglandin biosynthesis. It functions in the pathway lipid metabolism; leukotriene B4 biosynthesis. Activated by cytosolic calcium, which is necessary for binding to membrane lipids. Activated by phosphorylation in response to mitogenic stimuli. Functionally, has primarily calcium-dependent phospholipase and lysophospholipase activities, with a major role in membrane lipid remodeling and biosynthesis of lipid mediators of the inflammatory response. Plays an important role in embryo implantation and parturition through its ability to trigger prostanoid production. Preferentially hydrolyzes the ester bond of the fatty acyl group attached at sn-2 position of phospholipids (phospholipase A2 activity). Selectively hydrolyzes sn-2 arachidonoyl group from membrane phospholipids, providing the precursor for eicosanoid biosynthesis via the cyclooxygenase pathway. In an alternative pathway of eicosanoid biosynthesis, hydrolyzes sn-2 fatty acyl chain of eicosanoid lysophopholipids to release free bioactive eicosanoids. Hydrolyzes the ester bond of the fatty acyl group attached at sn-1 position of phospholipids (phospholipase A1 activity) only if an ether linkage rather than an ester linkage is present at the sn-2 position. This hydrolysis is not stereospecific. Has calcium-independent phospholipase A2 and lysophospholipase activities in the presence of phosphoinositides. Has O-acyltransferase activity. Catalyzes the transfer of fatty acyl chains from phospholipids to a primary hydroxyl group of glycerol (sn-1 or sn-3), potentially contributing to monoacylglycerol synthesis. The protein is Cytosolic phospholipase A2 (PLA2G4A) of Bos taurus (Bovine).